Here is an 85-residue protein sequence, read N- to C-terminus: Large ribosomal subunit protein bL27 (85 aa).

Residues 1–20 form a disordered region; that stretch reads MATKKAGGSTRNGRDSEAKR.

The protein belongs to the bacterial ribosomal protein bL27 family.

The sequence is that of Large ribosomal subunit protein bL27 from Pasteurella multocida (strain Pm70).